A 519-amino-acid polypeptide reads, in one-letter code: Seed lectin (519 aa).

2 disulfides stabilise this stretch: Cys249/Cys258 and Cys274/Cys293. 2 consecutive Ricin B-type lectin domains span residues 261–387 (ETRT…WRVG) and 390–518 (VQPI…WVLF). The stretch at 271-311 (DALCVDVAGALTSDGSRLILYPCGQQVNQKWTFHSDGTVRS) is one 1-alpha repeat. Residues 276–279 (DVAG) and 296–298 (QVN) each bind a carbohydrate. One copy of the 1-beta repeat lies at 312–352 (LGKCLATNNSKFGNLVVIYDCSKLAAEDISWDVSVGGTIMN). A disulfide bond links Cys315 and Cys332. One copy of the 1-gamma repeat lies at 356 to 388 (EDLALTSNKATRSTNLTMEVNTYSASQGWRVGN). An N-linked (GlcNAc...) asparagine glycan is attached at Asn370. One copy of the 2-alpha repeat lies at 401-438 (DDMCLEATDGNTNMWLEECVPNQREQSWALYSDGTIRV). 2 disulfide bridges follow: Cys404/Cys419 and Cys445/Cys464. The 2-beta repeat unit spans residues 442–482 (RELCVTASSSTYDNWKVITILNCDGSNNQRWVFLADGSIST). A carbohydrate contacts are provided by residues Asp454, 491–494 (DVAR), 505–508 (HRPH), and Asn512. The 2-gamma repeat unit spans residues 486–513 (QRLAMDVARSDVDLKKIILHRPHGDLNQ).

The protein in the N-terminal section; belongs to the ribosome-inactivating protein family. Type 2 RIP subfamily. Heterotrimer consisting of Aalpha, Abeta and B chains with Abeta and B being disulfide-linked.

Seed lectin similar to type 2 ribosome-inactivating proteins. The Aalpha and Abeta chains constitute the rRNA glycosidase domain and the B chain the carbohydrate-binding lectin domain. Is predicted to have no glycosidase activity and, hence, to be non-toxic, due to small changes in both the nucleotide binding and carbohydrate binding capabilities. Binds galactose and derivatives with a preference for the beta-anomeric forms. Binds prophyrins. Has hemagglutinating activity towards rabbit and human erythrocytes. This Trichosanthes anguina (Snake gourd) protein is Seed lectin.